The primary structure comprises 458 residues: Bifunctional protein GlmU (458 aa).

Positions 1-231 are pyrophosphorylase; the sequence is MSNRALSVVV…QTEVEGVNNR (231 aa). Residues 11 to 14, K25, Q78, 83 to 84, 105 to 107, G142, E156, N171, and N229 each bind UDP-N-acetyl-alpha-D-glucosamine; these read LAAG, GT, and YGD. D107 provides a ligand contact to Mg(2+). N229 provides a ligand contact to Mg(2+). Positions 232–252 are linker; it reads LQLARLERLFQREQAERLLLA. Residues 253 to 458 are N-acetyltransferase; the sequence is GVMLSDPDRF…ANWTRPVKKK (206 aa). Residues R335 and K353 each coordinate UDP-N-acetyl-alpha-D-glucosamine. The active-site Proton acceptor is the H365. Y368 and N379 together coordinate UDP-N-acetyl-alpha-D-glucosamine. Acetyl-CoA is bound by residues A382, 388-389, S407, A425, and R442; that span reads NY.

It in the N-terminal section; belongs to the N-acetylglucosamine-1-phosphate uridyltransferase family. In the C-terminal section; belongs to the transferase hexapeptide repeat family. In terms of assembly, homotrimer. Mg(2+) is required as a cofactor.

Its subcellular location is the cytoplasm. It carries out the reaction alpha-D-glucosamine 1-phosphate + acetyl-CoA = N-acetyl-alpha-D-glucosamine 1-phosphate + CoA + H(+). The catalysed reaction is N-acetyl-alpha-D-glucosamine 1-phosphate + UTP + H(+) = UDP-N-acetyl-alpha-D-glucosamine + diphosphate. It functions in the pathway nucleotide-sugar biosynthesis; UDP-N-acetyl-alpha-D-glucosamine biosynthesis; N-acetyl-alpha-D-glucosamine 1-phosphate from alpha-D-glucosamine 6-phosphate (route II): step 2/2. Its pathway is nucleotide-sugar biosynthesis; UDP-N-acetyl-alpha-D-glucosamine biosynthesis; UDP-N-acetyl-alpha-D-glucosamine from N-acetyl-alpha-D-glucosamine 1-phosphate: step 1/1. It participates in bacterial outer membrane biogenesis; LPS lipid A biosynthesis. In terms of biological role, catalyzes the last two sequential reactions in the de novo biosynthetic pathway for UDP-N-acetylglucosamine (UDP-GlcNAc). The C-terminal domain catalyzes the transfer of acetyl group from acetyl coenzyme A to glucosamine-1-phosphate (GlcN-1-P) to produce N-acetylglucosamine-1-phosphate (GlcNAc-1-P), which is converted into UDP-GlcNAc by the transfer of uridine 5-monophosphate (from uridine 5-triphosphate), a reaction catalyzed by the N-terminal domain. The chain is Bifunctional protein GlmU from Sodalis glossinidius (strain morsitans).